The sequence spans 430 residues: tRNA(Ile)-lysidine synthase (430 aa).

An ATP-binding site is contributed by 27 to 32 (SGGSDS).

This sequence belongs to the tRNA(Ile)-lysidine synthase family.

It is found in the cytoplasm. The enzyme catalyses cytidine(34) in tRNA(Ile2) + L-lysine + ATP = lysidine(34) in tRNA(Ile2) + AMP + diphosphate + H(+). Its function is as follows. Ligates lysine onto the cytidine present at position 34 of the AUA codon-specific tRNA(Ile) that contains the anticodon CAU, in an ATP-dependent manner. Cytidine is converted to lysidine, thus changing the amino acid specificity of the tRNA from methionine to isoleucine. The chain is tRNA(Ile)-lysidine synthase from Rickettsia bellii (strain RML369-C).